The following is an 814-amino-acid chain: Lon protease (814 aa).

The segment at 1 to 20 is disordered; that stretch reads MANEAHNIEHTDPEFRDDSA. The 195-residue stretch at 25-219 folds into the Lon N-terminal domain; it reads LPLLPVRDTV…KINQHLAKEL (195 aa). 372-379 lines the ATP pocket; the sequence is GPPGVGKT. In terms of domain architecture, Lon proteolytic spans 610 to 792; it reads TKRAGVVVGL…DEVLEIALPS (183 aa). Active-site residues include S697 and K740.

This sequence belongs to the peptidase S16 family. As to quaternary structure, homohexamer. Organized in a ring with a central cavity.

The protein localises to the cytoplasm. It catalyses the reaction Hydrolysis of proteins in presence of ATP.. ATP-dependent serine protease that mediates the selective degradation of mutant and abnormal proteins as well as certain short-lived regulatory proteins. Required for cellular homeostasis and for survival from DNA damage and developmental changes induced by stress. Degrades polypeptides processively to yield small peptide fragments that are 5 to 10 amino acids long. Binds to DNA in a double-stranded, site-specific manner. The polypeptide is Lon protease (Koribacter versatilis (strain Ellin345)).